The following is a 776-amino-acid chain: 3-isopropylmalate dehydratase (776 aa).

[4Fe-4S] cluster-binding residues include cysteine 357, cysteine 418, and cysteine 421. Over residues 482-493 the composition is skewed to basic and acidic residues; sequence SAPKVEVRHDTD. 2 disordered regions span residues 482 to 518 and 525 to 544; these read SAPK…SDVA and DIPV…SADA. The span at 527-538 shows a compositional bias: polar residues; it reads PVSNSSTQSPGS.

Belongs to the aconitase/IPM isomerase family. In terms of assembly, monomer. Requires [4Fe-4S] cluster as cofactor.

The enzyme catalyses (2R,3S)-3-isopropylmalate = (2S)-2-isopropylmalate. It functions in the pathway amino-acid biosynthesis; L-leucine biosynthesis; L-leucine from 3-methyl-2-oxobutanoate: step 2/4. Functionally, catalyzes the isomerization between 2-isopropylmalate and 3-isopropylmalate, via the formation of 2-isopropylmaleate. The protein is 3-isopropylmalate dehydratase (LEU1) of Eremothecium gossypii (strain ATCC 10895 / CBS 109.51 / FGSC 9923 / NRRL Y-1056) (Yeast).